The sequence spans 244 residues: NAD-dependent protein deacetylase (244 aa).

Positions 1-244 (MDDKINKLKE…IGKVLGKVID (244 aa)) constitute a Deacetylase sirtuin-type domain. The NAD(+) site is built by alanine 24, threonine 28, phenylalanine 35, arginine 36, glutamine 105, isoleucine 107, aspartate 108, and histidine 123. Phenylalanine 35 contacts nicotinamide. Isoleucine 107 and aspartate 108 together coordinate nicotinamide. Histidine 123 serves as the catalytic Proton acceptor. Residues cysteine 131, cysteine 134, cysteine 152, and cysteine 155 each contribute to the Zn(2+) site. 4 residues coordinate NAD(+): threonine 193, serine 194, asparagine 217, and isoleucine 235.

This sequence belongs to the sirtuin family. Class U subfamily. Zn(2+) serves as cofactor.

The protein localises to the cytoplasm. It carries out the reaction N(6)-acetyl-L-lysyl-[protein] + NAD(+) + H2O = 2''-O-acetyl-ADP-D-ribose + nicotinamide + L-lysyl-[protein]. Functionally, NAD-dependent protein deacetylase which modulates the activities of several enzymes which are inactive in their acetylated form. This chain is NAD-dependent protein deacetylase, found in Clostridium perfringens (strain 13 / Type A).